The sequence spans 276 residues: Diaminopimelate epimerase (276 aa).

Asn13, Gln46, and Asn66 together coordinate substrate. The Proton donor role is filled by Cys75. Residues 76–77 (GN), Asn159, Asn192, and 210–211 (ER) contribute to the substrate site. Cys219 (proton acceptor) is an active-site residue. Residue 220 to 221 (GT) participates in substrate binding.

Belongs to the diaminopimelate epimerase family. In terms of assembly, homodimer.

The protein resides in the cytoplasm. It carries out the reaction (2S,6S)-2,6-diaminopimelate = meso-2,6-diaminopimelate. Its pathway is amino-acid biosynthesis; L-lysine biosynthesis via DAP pathway; DL-2,6-diaminopimelate from LL-2,6-diaminopimelate: step 1/1. Catalyzes the stereoinversion of LL-2,6-diaminopimelate (L,L-DAP) to meso-diaminopimelate (meso-DAP), a precursor of L-lysine and an essential component of the bacterial peptidoglycan. In Azotobacter vinelandii (strain DJ / ATCC BAA-1303), this protein is Diaminopimelate epimerase.